We begin with the raw amino-acid sequence, 342 residues long: tRNA N6-adenosine threonylcarbamoyltransferase (342 aa).

The Fe cation site is built by His-114 and His-118. Residues 136–140 (LVSGG), Asp-169, Gly-182, Asp-186, and Asn-275 each bind substrate. Fe cation is bound at residue Asp-301.

The protein belongs to the KAE1 / TsaD family. The cofactor is Fe(2+).

Its subcellular location is the cytoplasm. It catalyses the reaction L-threonylcarbamoyladenylate + adenosine(37) in tRNA = N(6)-L-threonylcarbamoyladenosine(37) in tRNA + AMP + H(+). Its function is as follows. Required for the formation of a threonylcarbamoyl group on adenosine at position 37 (t(6)A37) in tRNAs that read codons beginning with adenine. Is involved in the transfer of the threonylcarbamoyl moiety of threonylcarbamoyl-AMP (TC-AMP) to the N6 group of A37, together with TsaE and TsaB. TsaD likely plays a direct catalytic role in this reaction. The protein is tRNA N6-adenosine threonylcarbamoyltransferase of Streptococcus pyogenes serotype M18 (strain MGAS8232).